Here is a 136-residue protein sequence, read N- to C-terminus: Large ribosomal subunit protein bL19 (136 aa).

It belongs to the bacterial ribosomal protein bL19 family.

Its function is as follows. This protein is located at the 30S-50S ribosomal subunit interface and may play a role in the structure and function of the aminoacyl-tRNA binding site. The protein is Large ribosomal subunit protein bL19 of Xylella fastidiosa (strain 9a5c).